The primary structure comprises 723 residues: Probable alpha-fucosidase A (723 aa).

A signal peptide spans 1–15 (MRSLVLLGMSSLATA). N-linked (GlcNAc...) asparagine glycans are attached at residues Asn77, Asn98, Asn117, Asn171, Asn194, Asn243, Asn334, Asn558, Asn566, and Asn595.

This sequence belongs to the glycosyl hydrolase 95 family.

The protein resides in the secreted. The enzyme catalyses an alpha-L-fucoside + H2O = L-fucose + an alcohol. Its function is as follows. Alpha-fucosidase involved in degradation of fucosylated xyloglucans. Hydrolyzes alpha-1,2-linked fucose. This Aspergillus oryzae (strain ATCC 42149 / RIB 40) (Yellow koji mold) protein is Probable alpha-fucosidase A (afcA).